The primary structure comprises 172 residues: Putative phosphoesterase BC_1225 (172 aa).

His34 (proton donor) is an active-site residue. 2 consecutive short sequence motifs (HXTX) follow at residues 34–37 (HITL) and 115–118 (HLTI). His115 acts as the Proton acceptor in catalysis.

It belongs to the 2H phosphoesterase superfamily. YjcG family.

This chain is Putative phosphoesterase BC_1225, found in Bacillus cereus (strain ATCC 14579 / DSM 31 / CCUG 7414 / JCM 2152 / NBRC 15305 / NCIMB 9373 / NCTC 2599 / NRRL B-3711).